Reading from the N-terminus, the 316-residue chain is Annexin A13 (316 aa).

A lipid anchor (N-myristoyl glycine) is attached at glycine 2. Annexin repeat units follow at residues 14-85, 86-157, 169-241, and 245-316; these read FDVD…ALLD, RPSE…SLLQ, DLAG…TLVR, and DQEG…ALLH.

It belongs to the annexin family. In terms of assembly, monomer and homodimer. In terms of tissue distribution, detected in intestine, and at much lower levels also in kidney (at protein level).

It is found in the apical cell membrane. The protein resides in the cell membrane. It localises to the cytoplasmic vesicle. In terms of biological role, binds to membranes enriched in phosphatidylserine or phosphatidylglycerol in a calcium-dependent manner. Half-maximal membrane binding requires about 60 uM calcium. Does not bind to membranes that lack phospholipids with an acidic headgroup. Its function is as follows. Binds to membranes enriched in phosphatidylserine or phosphatidylglycerol in a calcium-dependent manner, but requires higher calcium levels for membrane binding than isoform A. Half-maximal membrane binding requires about 320 uM calcium. May play a role in vesicular traffic to the apical plasma membrane. The protein is Annexin A13 (ANXA13) of Canis lupus familiaris (Dog).